Here is a 1484-residue protein sequence, read N- to C-terminus: DNA-directed RNA polymerase subunit beta' (1484 aa).

Residues cysteine 67, cysteine 69, cysteine 82, and cysteine 85 each contribute to the Zn(2+) site. 3 residues coordinate Mg(2+): aspartate 499, aspartate 501, and aspartate 503. Positions 867, 943, 950, and 953 each coordinate Zn(2+).

It belongs to the RNA polymerase beta' chain family. In terms of assembly, the RNAP catalytic core consists of 2 alpha, 1 beta, 1 beta' and 1 omega subunit. When a sigma factor is associated with the core the holoenzyme is formed, which can initiate transcription. Mg(2+) serves as cofactor. The cofactor is Zn(2+).

The catalysed reaction is RNA(n) + a ribonucleoside 5'-triphosphate = RNA(n+1) + diphosphate. DNA-dependent RNA polymerase catalyzes the transcription of DNA into RNA using the four ribonucleoside triphosphates as substrates. The sequence is that of DNA-directed RNA polymerase subunit beta' from Chlorobium phaeovibrioides (strain DSM 265 / 1930) (Prosthecochloris vibrioformis (strain DSM 265)).